The chain runs to 373 residues: 3-dehydroquinate synthase (373 aa).

NAD(+) contacts are provided by residues Asp74–Lys79, Gly108–Asp112, Thr132–Thr133, Lys145, Lys154, and Thr172–Thr175. Zn(2+) contacts are provided by Glu187, His250, and His266.

This sequence belongs to the sugar phosphate cyclases superfamily. Dehydroquinate synthase family. Co(2+) is required as a cofactor. Zn(2+) serves as cofactor. Requires NAD(+) as cofactor.

The protein resides in the cytoplasm. It carries out the reaction 7-phospho-2-dehydro-3-deoxy-D-arabino-heptonate = 3-dehydroquinate + phosphate. The protein operates within metabolic intermediate biosynthesis; chorismate biosynthesis; chorismate from D-erythrose 4-phosphate and phosphoenolpyruvate: step 2/7. In terms of biological role, catalyzes the conversion of 3-deoxy-D-arabino-heptulosonate 7-phosphate (DAHP) to dehydroquinate (DHQ). The sequence is that of 3-dehydroquinate synthase from Nocardia farcinica (strain IFM 10152).